Reading from the N-terminus, the 488-residue chain is Histone deacetylase 2 (488 aa).

The interval 9 to 322 is histone deacetylase; the sequence is KKKVCYYYDG…WTYETAVALD (314 aa). 1D-myo-inositol 1,4,5,6-tetrakisphosphate-binding residues include G28 and K32. Residue H142 is part of the active site. Zn(2+) contacts are provided by D177, H179, and D265. R271 contacts 1D-myo-inositol 1,4,5,6-tetrakisphosphate. The disordered stretch occupies residues 389–488; that stretch reads AVHEDSGDED…GAKSEQLSNP (100 aa). Basic and acidic residues predominate over residues 402-417; that stretch reads PDKRISIRASDKRIAC. A compositionally biased stretch (acidic residues) spans 418–428; that stretch reads DEEFSDSEDEG. A compositionally biased stretch (basic and acidic residues) spans 429–481; the sequence is EGGRRNVADHKKGAKKARIEEDKKETEDKKADVKEEDKSKDNSGEKTDTKGAK.

Belongs to the histone deacetylase family. HD type 1 subfamily. It depends on Zn(2+) as a cofactor.

It is found in the nucleus. The protein resides in the cytoplasm. The catalysed reaction is N(6)-acetyl-L-lysyl-[histone] + H2O = L-lysyl-[histone] + acetate. The enzyme catalyses N(6)-acetyl-L-lysyl-[protein] + H2O = L-lysyl-[protein] + acetate. It carries out the reaction N(6)-(2E)-butenoyl-L-lysyl-[protein] + H2O = (2E)-2-butenoate + L-lysyl-[protein]. It catalyses the reaction N(6)-(2-hydroxyisobutanoyl)-L-lysyl-[protein] + H2O = 2-hydroxy-2-methylpropanoate + L-lysyl-[protein]. The catalysed reaction is N(6)-[(S)-lactoyl]-L-lysyl-[protein] + H2O = (S)-lactate + L-lysyl-[protein]. Its activity is regulated as follows. Inositol tetraphosphate (1D-myo-inositol 1,4,5,6-tetrakisphosphate) may act as an intermolecular glue between HDAC2 and N-Cor repressor complex components. Histone deacetylase that catalyzes the deacetylation of lysine residues on the N-terminal part of the core histones (H2A, H2B, H3 and H4). Histone deacetylation gives a tag for epigenetic repression and plays an important role in transcriptional regulation, cell cycle progression and developmental events. Histone deacetylases act via the formation of large multiprotein complexes. Also deacetylates non-histone proteins. In addition to protein deacetylase activity, also acts as a protein-lysine deacylase by recognizing other acyl groups: catalyzes removal of (2E)-butenoyl (crotonyl), lactoyl (lactyl) and 2-hydroxyisobutanoyl (2-hydroxyisobutyryl) acyl groups from lysine residues, leading to protein decrotonylation, delactylation and de-2-hydroxyisobutyrylation, respectively. The sequence is that of Histone deacetylase 2 (HDAC2) from Gallus gallus (Chicken).